Reading from the N-terminus, the 237-residue chain is Ubiquinone/menaquinone biosynthesis C-methyltransferase UbiE (237 aa).

S-adenosyl-L-methionine-binding residues include T60 and D80.

The protein belongs to the class I-like SAM-binding methyltransferase superfamily. MenG/UbiE family.

The enzyme catalyses a 2-demethylmenaquinol + S-adenosyl-L-methionine = a menaquinol + S-adenosyl-L-homocysteine + H(+). The catalysed reaction is a 2-methoxy-6-(all-trans-polyprenyl)benzene-1,4-diol + S-adenosyl-L-methionine = a 5-methoxy-2-methyl-3-(all-trans-polyprenyl)benzene-1,4-diol + S-adenosyl-L-homocysteine + H(+). It participates in quinol/quinone metabolism; menaquinone biosynthesis; menaquinol from 1,4-dihydroxy-2-naphthoate: step 2/2. The protein operates within cofactor biosynthesis; ubiquinone biosynthesis. Its function is as follows. Methyltransferase required for the conversion of demethylmenaquinol (DMKH2) to menaquinol (MKH2) and the conversion of 2-polyprenyl-6-methoxy-1,4-benzoquinol (DDMQH2) to 2-polyprenyl-3-methyl-6-methoxy-1,4-benzoquinol (DMQH2). The polypeptide is Ubiquinone/menaquinone biosynthesis C-methyltransferase UbiE (Syntrophotalea carbinolica (strain DSM 2380 / NBRC 103641 / GraBd1) (Pelobacter carbinolicus)).